Reading from the N-terminus, the 872-residue chain is Trichohyalin-like protein 1 (872 aa).

One can recognise an EF-hand domain in the interval 46-81; that stretch reads CAIHAVERNLNLLNIDSNGAISFDEFVLAIFSFLNV. The span at 117–127 shows a compositional bias: polar residues; the sequence is QWTEGTSQTQD. 3 disordered regions span residues 117–759, 774–813, and 830–872; these read QWTE…ERGA, LQQTNVTQGEHQNQAQTASVASPEIRRNQSSASLTNDSSD, and EFLP…APKQ. Basic and acidic residues-rich tracts occupy residues 142 to 155, 164 to 190, 218 to 235, 296 to 307, 324 to 348, 365 to 375, 399 to 435, and 486 to 505; these read SLEERAVEHNRVDP, LPVETSEHSDSKNQHLKGDEQSQKVDQ, TKGEGQNKEILQKGDILA, GKDEPSSEHVDL, AAKDESRTAETPEPPIQEKEYETRD, RVERKGVRGPE, EDKKYHELQESSKEKNAGEDSETHELNSEGGEQKDSE, and SGEKNKMTTKIHDKLVKEDD. Over residues 538–570 the composition is skewed to polar residues; sequence NSETSDLFVQGDSQSQTNPFRGSVQGSDSNNPE. Basic and acidic residues-rich tracts occupy residues 571–584, 592–608, and 664–684; these read TQKHLALSEEKRVQ, RGEDEQVTEEHAQEHEG, and TKKDSRKELKDQSPSTKKEED. Polar residues-rich tracts occupy residues 699–708 and 718–729; these read ENNAVSQKTC and SPQQLAGEQSLS. The span at 730–751 shows a compositional bias: basic and acidic residues; the sequence is TKEHDPSVSESGLEERMQRDQE. Composition is skewed to polar residues over residues 774-793 and 801-812; these read LQQTNVTQGEHQNQAQTASV and NQSSASLTNDSS. A compositionally biased stretch (basic and acidic residues) spans 849-865; the sequence is LEDKQGRPQREELEPQK.

It belongs to the S-100 family.

This chain is Trichohyalin-like protein 1 (TCHHL1), found in Bos taurus (Bovine).